The chain runs to 678 residues: Serine/threonine-protein kinase mph1 (678 aa).

2 disordered regions span residues 39–93 and 114–209; these read KNDT…NSAL and LPST…SNSV. 2 stretches are compositionally biased toward polar residues: residues 41–66 and 114–125; these read DTFSSKSSHSDGTVTGDTLRRQSSGA and LPSTNASHSEVS. In terms of domain architecture, Protein kinase spans 316–607; sequence FIKLGVVGKG…LVHPFLNPLP (292 aa). Residues 322–330 and lysine 345 each bind ATP; that span reads VGKGGSSMV. Aspartate 442 (proton acceptor) is an active-site residue.

It belongs to the protein kinase superfamily. Ser/Thr protein kinase family.

The enzyme catalyses L-seryl-[protein] + ATP = O-phospho-L-seryl-[protein] + ADP + H(+). It catalyses the reaction L-threonyl-[protein] + ATP = O-phospho-L-threonyl-[protein] + ADP + H(+). It carries out the reaction L-tyrosyl-[protein] + ATP = O-phospho-L-tyrosyl-[protein] + ADP + H(+). Its function is as follows. Involved in mitotic spindle assembly checkpoint signaling, a process that delays anaphase until chromosomes are bioriented on the spindle, and in the repair of incorrect mitotic kinetochore-spindle microtubule attachments. Phosphorylates spc7/knl1 on MELT motifs; phosphorylation is required for recruitment of the BUB1-BUB3 complex to kinetochores. In Schizosaccharomyces pombe (strain 972 / ATCC 24843) (Fission yeast), this protein is Serine/threonine-protein kinase mph1.